A 72-amino-acid chain; its full sequence is MNLGLAIFLIIIALLVGAVAGFYGARAYMKKYFKENPPISEDMIVAMMSQMGQKPSNKKVHQVMNMMKHQQK.

A helical transmembrane segment spans residues 3-23 (LGLAIFLIIIALLVGAVAGFY).

It belongs to the UPF0154 family.

It is found in the cell membrane. The polypeptide is UPF0154 protein lhv_1362 (Lactobacillus helveticus (strain DPC 4571)).